A 442-amino-acid chain; its full sequence is Serine protease AprX (442 aa).

In terms of domain architecture, Peptidase S8 spans lysine 122–valine 439. Catalysis depends on charge relay system residues aspartate 155 and histidine 187. The disordered stretch occupies residues aspartate 318–proline 337. Residue serine 384 is the Charge relay system of the active site. The segment at glutamate 423–glutamine 442 is disordered.

Belongs to the peptidase S8 family.

It localises to the cytoplasm. With respect to regulation, is completely inhibited by phenylmethanesulphonylfluoride (PMSF) in vitro. In terms of biological role, displays serine protease activity. Seems to have a broad substrate specificity. The protein is Serine protease AprX (aprX) of Bacillus subtilis (strain 168).